Consider the following 836-residue polypeptide: Probable RING finger protein 207 homolog (836 aa).

The RING-type zinc-finger motif lies at 8–42 (CTICKNDFEEPILFSCQHTTCRKCSNGSPSCKTCS). The segment at 68 to 115 (EEMEQCANCEQITLPMFYCETCQQSLCLACRNVTHQARMFSSHKIISS) adopts a B box-type 1; atypical zinc-finger fold. The Zn(2+) site is built by C73, C76, C97, and H102. The segment at 122-164 (YSSSLCKDHNEPYILYCSDVRKLVCIQCFNGRPLEERHSFISI) adopts a B box-type 2; degenerate zinc-finger fold. The stretch at 527 to 557 (QNRIMAIEKEEENRRLNQEAKKKEELAGQSA) forms a coiled coil. Over residues 540-552 (RRLNQEAKKKEEL) the composition is skewed to basic and acidic residues. Residues 540–571 (RRLNQEAKKKEELAGQSAAMKSLKHGKTKRKE) form a disordered region. Over residues 561-571 (SLKHGKTKRKE) the composition is skewed to basic residues.

The chain is Probable RING finger protein 207 homolog from Caenorhabditis briggsae.